A 25-amino-acid polypeptide reads, in one-letter code: Omega conotoxin-CVIF (25 aa).

3 disulfide bridges follow: Cys1-Cys16, Cys8-Cys20, and Cys15-Cys25. The residue at position 25 (Cys25) is a Cysteine amide.

This sequence belongs to the conotoxin O1 superfamily. Expressed by the venom duct.

The protein localises to the secreted. Functionally, omega-conotoxins act at presynaptic membranes, they bind and block voltage-gated calcium channels. This toxin blocks N-type calcium channels (Cav2.2/CACNA1B). It shows a higher potency when Cav2.2/CACNA1B is only expressed with the ancillary subunit CACNB3 (IC(50)=0.1 nM) than on Cav2.2/CACNA1B expressed with the ancillary subunits CACNA2D1 and CACNB3 (IC(50)=19.9 nM). The Cav2.2/CACNA1B block by this toxin is voltage-independent, whereas the recovery from toxin block is voltage-dependent. There is a low recovery at physiological membrane potential and a high recovery with hyperpolarized potential. This indicates that the toxin has a higher affinity for Cav2.2/CACNA1B in the inactivated state. It is noteworthy that ancillary subunits beta modulate recovery from this toxin block. Cav2.2/CACNA1B expressed with the ancillary subunit CACNB2a (isoform 2a) almost recover completely from this toxin block, whereas an expression with CACNB3 exhibits relatively weak recovery. Inhibition by this toxin of excitatory synaptic transmission is reversible. In vivo, when tested on rat model of persistent pain, this toxin blocks chronic pain behavior. This is Omega conotoxin-CVIF from Conus catus (Cat cone).